Consider the following 130-residue polypeptide: ATP synthase epsilon chain (130 aa).

The protein belongs to the ATPase epsilon chain family. As to quaternary structure, F-type ATPases have 2 components, CF(1) - the catalytic core - and CF(0) - the membrane proton channel. CF(1) has five subunits: alpha(3), beta(3), gamma(1), delta(1), epsilon(1). CF(0) has three main subunits: a, b and c.

Its subcellular location is the cell membrane. Produces ATP from ADP in the presence of a proton gradient across the membrane. The chain is ATP synthase epsilon chain (atpC) from Mycoplasmoides gallisepticum (strain R(low / passage 15 / clone 2)) (Mycoplasma gallisepticum).